The sequence spans 646 residues: Amyloid beta A4 precursor protein-binding family B member 1-interacting protein (646 aa).

The tract at residues 82–141 is disordered; sequence FATERDTSKGSVPVAPAPSKPQSNFSLPASFDSSKPATSSNSIAAPPPPPAFKPSKEEEE. The span at 101 to 116 shows a compositional bias: polar residues; that stretch reads KPQSNFSLPASFDSSK. Residues 162-248 enclose the Ras-associating domain; sequence KKLVVKVEIT…NKVLFQEKKH (87 aa). The region spanning 292-401 is the PH domain; it reads VPDLEGVLYL…WVTGIRVAKY (110 aa). The disordered stretch occupies residues 420 to 646; sequence ASWANRTIQA…NAMQKKRTQP (227 aa). Low complexity predominate over residues 429 to 445; it reads ASSTASTPSPTPKAKAA. Composition is skewed to pro residues over residues 465–500, 509–536, 560–577, and 584–598; these read LPPP…PPVP, FPPP…PPPE, LPPP…PPPA, and APPP…PAPA.

The protein belongs to the MRL family.

It is found in the cell membrane. It localises to the cytoplasm. Its subcellular location is the cytoskeleton. Appears to function in the signal transduction from Ras activation to actin cytoskeletal remodeling. The sequence is that of Amyloid beta A4 precursor protein-binding family B member 1-interacting protein (apbb1ip) from Danio rerio (Zebrafish).